The chain runs to 292 residues: Homoserine kinase (292 aa).

ATP is bound at residue 81 to 91 (RPKSGLGSSGA).

This sequence belongs to the GHMP kinase family. Homoserine kinase subfamily.

Its subcellular location is the cytoplasm. It catalyses the reaction L-homoserine + ATP = O-phospho-L-homoserine + ADP + H(+). It functions in the pathway amino-acid biosynthesis; L-threonine biosynthesis; L-threonine from L-aspartate: step 4/5. Its function is as follows. Catalyzes the ATP-dependent phosphorylation of L-homoserine to L-homoserine phosphate. This is Homoserine kinase from Pyrococcus furiosus (strain ATCC 43587 / DSM 3638 / JCM 8422 / Vc1).